The sequence spans 679 residues: Transmembrane protein 214-B (679 aa).

The interval 1-94 (MASGAPDGKW…KKKPQSGDSV (94 aa)) is disordered. The span at 18–30 (KSGERREGERKAL) shows a compositional bias: basic and acidic residues. N-linked (GlcNAc...) asparagine glycosylation is found at Asn-70, Asn-298, and Asn-322. A run of 2 helical transmembrane segments spans residues 468-488 (GGFP…GSVL) and 606-626 (LLLH…EAAV).

Belongs to the TMEM214 family. As to quaternary structure, constitutively interacts with CASP4; required for the localization of procaspase 4 to the ER.

It localises to the endoplasmic reticulum membrane. In terms of biological role, critical mediator, in cooperation with CASP4, of endoplasmic reticulum-stress induced apoptosis. Required or the activation of CASP4 following endoplasmic reticulum stress. The protein is Transmembrane protein 214-B (tmem214-b) of Xenopus laevis (African clawed frog).